Reading from the N-terminus, the 283-residue chain is Phosphatidylserine decarboxylase proenzyme (283 aa).

Residues D90, H143, and S248 each act as charge relay system; for autoendoproteolytic cleavage activity in the active site. S248 functions as the Schiff-base intermediate with substrate; via pyruvic acid; for decarboxylase activity in the catalytic mechanism. At S248 the chain carries Pyruvic acid (Ser); by autocatalysis.

It belongs to the phosphatidylserine decarboxylase family. PSD-B subfamily. Prokaryotic type I sub-subfamily. Heterodimer of a large membrane-associated beta subunit and a small pyruvoyl-containing alpha subunit. Requires pyruvate as cofactor. Is synthesized initially as an inactive proenzyme. Formation of the active enzyme involves a self-maturation process in which the active site pyruvoyl group is generated from an internal serine residue via an autocatalytic post-translational modification. Two non-identical subunits are generated from the proenzyme in this reaction, and the pyruvate is formed at the N-terminus of the alpha chain, which is derived from the carboxyl end of the proenzyme. The autoendoproteolytic cleavage occurs by a canonical serine protease mechanism, in which the side chain hydroxyl group of the serine supplies its oxygen atom to form the C-terminus of the beta chain, while the remainder of the serine residue undergoes an oxidative deamination to produce ammonia and the pyruvoyl prosthetic group on the alpha chain. During this reaction, the Ser that is part of the protease active site of the proenzyme becomes the pyruvoyl prosthetic group, which constitutes an essential element of the active site of the mature decarboxylase.

It localises to the cell membrane. It carries out the reaction a 1,2-diacyl-sn-glycero-3-phospho-L-serine + H(+) = a 1,2-diacyl-sn-glycero-3-phosphoethanolamine + CO2. Its pathway is phospholipid metabolism; phosphatidylethanolamine biosynthesis; phosphatidylethanolamine from CDP-diacylglycerol: step 2/2. Catalyzes the formation of phosphatidylethanolamine (PtdEtn) from phosphatidylserine (PtdSer). The chain is Phosphatidylserine decarboxylase proenzyme from Francisella tularensis subsp. holarctica (strain OSU18).